A 42-amino-acid polypeptide reads, in one-letter code: MSAEDLFTIQILCDQIELKLASIVINSNIKLQLKRKKKTQQL.

The protein resides in the cytoplasm. It localises to the nucleus. Functionally, mating type proteins are sequence specific DNA-binding proteins that act as master switches in yeast differentiation by controlling gene expression in a cell type-specific fashion. Required for meiosis, but plays no role in conjugation. The chain is Mating-type M-specific polypeptide Mi (mat1-Mi) from Schizosaccharomyces pombe (strain 972 / ATCC 24843) (Fission yeast).